The chain runs to 143 residues: MAIERTFSIIKPNAVAKNVIGSIFARFETAGFKIVGTKMLHLTVEQARGFYAEHDGKPFFDGLVEFMTSGPIVVSVLEGENAVQRHRDLLGATNPANALAGTLRADYADSLTENGTHGSDSVESAAREIAYFFGEGEVCPRTR.

Positions 11, 59, 87, 93, 104, and 114 each coordinate ATP. Residue His117 is the Pros-phosphohistidine intermediate of the active site.

Belongs to the NDK family. In terms of assembly, homotetramer. Mg(2+) serves as cofactor.

It is found in the cytoplasm. The catalysed reaction is a 2'-deoxyribonucleoside 5'-diphosphate + ATP = a 2'-deoxyribonucleoside 5'-triphosphate + ADP. The enzyme catalyses a ribonucleoside 5'-diphosphate + ATP = a ribonucleoside 5'-triphosphate + ADP. Functionally, major role in the synthesis of nucleoside triphosphates other than ATP. The ATP gamma phosphate is transferred to the NDP beta phosphate via a ping-pong mechanism, using a phosphorylated active-site intermediate. The sequence is that of Nucleoside diphosphate kinase from Escherichia coli O81 (strain ED1a).